The sequence spans 360 residues: Ribosomal RNA small subunit methyltransferase C (360 aa).

It belongs to the methyltransferase superfamily. RsmC family. In terms of assembly, monomer.

Its subcellular location is the cytoplasm. It catalyses the reaction guanosine(1207) in 16S rRNA + S-adenosyl-L-methionine = N(2)-methylguanosine(1207) in 16S rRNA + S-adenosyl-L-homocysteine + H(+). Functionally, specifically methylates the guanine in position 1207 of 16S rRNA in the 30S particle. This Alteromonas mediterranea (strain DSM 17117 / CIP 110805 / LMG 28347 / Deep ecotype) protein is Ribosomal RNA small subunit methyltransferase C.